A 254-amino-acid polypeptide reads, in one-letter code: 3-deoxy-manno-octulosonate cytidylyltransferase (254 aa).

This sequence belongs to the KdsB family.

It is found in the cytoplasm. The catalysed reaction is 3-deoxy-alpha-D-manno-oct-2-ulosonate + CTP = CMP-3-deoxy-beta-D-manno-octulosonate + diphosphate. Its pathway is nucleotide-sugar biosynthesis; CMP-3-deoxy-D-manno-octulosonate biosynthesis; CMP-3-deoxy-D-manno-octulosonate from 3-deoxy-D-manno-octulosonate and CTP: step 1/1. It functions in the pathway bacterial outer membrane biogenesis; lipopolysaccharide biosynthesis. Activates KDO (a required 8-carbon sugar) for incorporation into bacterial lipopolysaccharide in Gram-negative bacteria. The chain is 3-deoxy-manno-octulosonate cytidylyltransferase from Pseudomonas fluorescens (strain ATCC BAA-477 / NRRL B-23932 / Pf-5).